The primary structure comprises 1173 residues: Pleckstrin homology domain-containing family A member 6 (1173 aa).

The segment covering 1-22 (MSNKTGGKRSATINSDIANHNM) has biased composition (polar residues). The segment at 1-39 (MSNKTGGKRSATINSDIANHNMVSEVPPERPNIRATRTS) is disordered. The PH domain occupies 59–158 (PVTKAGWLYK…WIQAMGEAAR (100 aa)). The segment at 163–346 (PAQKSVPQPV…PSRFYPMPRR (184 aa)) is disordered. A compositionally biased stretch (basic and acidic residues) spans 201-233 (LEPEAKTRGEGDGRGCEKAERRPERPEVKKETL). Phosphoserine is present on residues serine 247 and serine 251. Polar residues-rich tracts occupy residues 270–281 (NGWQYSSPSRPG) and 311–322 (RKSSMNQLQQWV). A phosphoserine mark is found at serine 314, serine 459, serine 461, and serine 472. A Phosphotyrosine modification is found at tyrosine 492. Serine 665 carries the post-translational modification Phosphoserine. Disordered regions lie at residues 737-872 (RKNN…PRDI) and 888-984 (ALNK…RPAY). 2 stretches are compositionally biased toward low complexity: residues 761–782 (SSNSPASPLSSASLTSPLSPFS) and 789–799 (GSPTKPGSSEE). Over residues 815 to 824 (ESPPTVPPLP) the composition is skewed to pro residues. Serine 864 carries the phosphoserine modification. Residue threonine 868 is modified to Phosphothreonine. The residue at position 901 (serine 901) is a Phosphoserine. Threonine 908 carries the phosphothreonine modification. A compositionally biased stretch (polar residues) spans 915–926 (RTTNGLTNGLSS). Residue serine 925 is modified to Phosphoserine. Residues 940 to 952 (GKVKMSVEEQMDR) are compositionally biased toward basic and acidic residues. Basic residues predominate over residues 953-967 (MRRHQSGSMKEKRRS). Phosphoserine is present on residues serine 973, serine 979, and serine 992. Residue threonine 1045 is modified to Phosphothreonine. Residue serine 1065 is modified to Phosphoserine. Disordered regions lie at residues 1093-1114 (PIGEGDSVDVPQDSESQLQEQE) and 1130-1173 (RGRM…TMRV). Position 1140 is a phosphothreonine (threonine 1140). The span at 1141-1155 (PSPPTSPASPTPPVN) shows a compositional bias: pro residues. Serine 1142 bears the Phosphoserine mark. The residue at position 1145 (threonine 1145) is a Phosphothreonine. Phosphoserine is present on residues serine 1146 and serine 1149. Threonine 1151 is modified (phosphothreonine).

The chain is Pleckstrin homology domain-containing family A member 6 (Plekha6) from Mus musculus (Mouse).